We begin with the raw amino-acid sequence, 519 residues long: DNA-directed RNA polymerase subunit Rpo2N (519 aa).

It belongs to the RNA polymerase beta chain family. As to quaternary structure, part of the RNA polymerase complex.

Its subcellular location is the cytoplasm. The enzyme catalyses RNA(n) + a ribonucleoside 5'-triphosphate = RNA(n+1) + diphosphate. Its function is as follows. DNA-dependent RNA polymerase (RNAP) catalyzes the transcription of DNA into RNA using the four ribonucleoside triphosphates as substrates. The Rpo2 subunit (Rpo2N and Rpo2C in this organism) is implicated in DNA promoter recognition and in nucleotide binding. In Methanothermobacter thermautotrophicus (strain ATCC 29096 / DSM 1053 / JCM 10044 / NBRC 100330 / Delta H) (Methanobacterium thermoautotrophicum), this protein is DNA-directed RNA polymerase subunit Rpo2N.